The primary structure comprises 187 residues: NAC domain-containing protein 104 (187 aa).

Positions 3–155 constitute an NAC domain; sequence LPPGFRFFPT…KWVICRVYEQ (153 aa). Residues 94–161 mediate DNA binding; that stretch reads VGIKKYLTFY…VYEQNCSEEE (68 aa). The interval 118–142 is disordered; that stretch reads LPDSSSSSSRSSKRSSRASSSSHKP.

In terms of tissue distribution, expressed in root xylem vessels. Expressed in stems, vascular tissue of cauline leaves and tracheary elements of sepals.

It localises to the nucleus. In terms of biological role, probable transcription factor that influences tracheary elements and xylem development by negatively regulating secondary cell wall fiber synthesis and programmed cell death. The protein is NAC domain-containing protein 104 of Arabidopsis thaliana (Mouse-ear cress).